A 445-amino-acid chain; its full sequence is MNIHNIAIIGGGLSGCECALTLAKFGFSVTLFEQKPQLFSPAHNTPLLAELVCSNSLRSNELTTGIGLLKQELRELNSPLMAIADTCRVPAGKALAVDRELFSKQVTQLIESHPKIHLIREEVSSLSTSFLEKYDRIIVATGPLASPNISNSLSTLIGDKYLYFYDAIAPIVTADSIDMSIAFWGSRYEEQGEGDYLNCPMSYEEYQIFYSSLLKGEKVTNSKVEKEIHFEGCMPIEALAERGEKTLLFGPFKPVGLINPHTGLRPYAVLQLRPENLNKSMLNLVGCQTKLTYPAQDTIFRLVPGLSNVEFVRFGSMHRNTYINSPKILTDQLALRNFPCIHLAGQITGVEGYVESIACGLWVSILLLALSKDKKILRPPKTCALGGLLEHISCPSKQFQPSNIHFGLVPEPTEKIKKKERKEWYAQRARIDFYHWLNNELIHIM.

10-15 (GGGLSG) contributes to the FAD binding site.

This sequence belongs to the MnmG family. TrmFO subfamily. Requires FAD as cofactor.

The protein resides in the cytoplasm. The enzyme catalyses uridine(54) in tRNA + (6R)-5,10-methylene-5,6,7,8-tetrahydrofolate + NADH + H(+) = 5-methyluridine(54) in tRNA + (6S)-5,6,7,8-tetrahydrofolate + NAD(+). It catalyses the reaction uridine(54) in tRNA + (6R)-5,10-methylene-5,6,7,8-tetrahydrofolate + NADPH + H(+) = 5-methyluridine(54) in tRNA + (6S)-5,6,7,8-tetrahydrofolate + NADP(+). Its function is as follows. Catalyzes the folate-dependent formation of 5-methyl-uridine at position 54 (M-5-U54) in all tRNAs. The sequence is that of Methylenetetrahydrofolate--tRNA-(uracil-5-)-methyltransferase TrmFO from Lawsonia intracellularis (strain PHE/MN1-00).